Consider the following 381-residue polypeptide: MYFSRDDLLQKETETLAPYAISNANNGGRIYEEEEHSYRLPFQRDRDRILHSSAFKRLQYKTQVFIFSVGENYRNRMTHTLEVAGLSRTIASALGLNSLLSESIALAHDLGHTPFGHAGQEILSGLMKDYGGFEHNKQSLRIVTSIEKKYPNFPGLNLCRETLKGLMKHGADYDSSVILLERKENGPSLEGMIADLSDEIAYTNHDIEDGWEMGYLHLGDLLENPFWKEVYEECKDQYKEVGEKILIRTSIRTLTNFLVSDLIQNIAHRLEKKQIKSTEDLALLWKQDFRIASFSKEVDLKFRELKSFLYEKLYRHEDLIRMSDYGKKIIESLFDYFLKHPEKIPDTYKERIEEESLYRVISDYVAGMTDRYAEKIYQSLP.

Residues R76–T203 enclose the HD domain.

It belongs to the dGTPase family. Type 2 subfamily.

This is Deoxyguanosinetriphosphate triphosphohydrolase-like protein from Leptospira interrogans serogroup Icterohaemorrhagiae serovar copenhageni (strain Fiocruz L1-130).